A 179-amino-acid chain; its full sequence is ATP-dependent protease subunit HslV (179 aa).

T7 is a catalytic residue. G162, C165, and T168 together coordinate Na(+).

It belongs to the peptidase T1B family. HslV subfamily. A double ring-shaped homohexamer of HslV is capped on each side by a ring-shaped HslU homohexamer. The assembly of the HslU/HslV complex is dependent on binding of ATP.

The protein resides in the cytoplasm. The catalysed reaction is ATP-dependent cleavage of peptide bonds with broad specificity.. With respect to regulation, allosterically activated by HslU binding. In terms of biological role, protease subunit of a proteasome-like degradation complex believed to be a general protein degrading machinery. This is ATP-dependent protease subunit HslV from Aromatoleum aromaticum (strain DSM 19018 / LMG 30748 / EbN1) (Azoarcus sp. (strain EbN1)).